Consider the following 57-residue polypeptide: uncharacterized protein (57 aa).

This is an uncharacterized protein from Ureaplasma parvum serovar 3 (strain ATCC 700970).